A 292-amino-acid polypeptide reads, in one-letter code: Universal stress protein Mb2346c (292 aa).

Belongs to the universal stress protein A family.

The sequence is that of Universal stress protein Mb2346c from Mycobacterium bovis (strain ATCC BAA-935 / AF2122/97).